A 223-amino-acid polypeptide reads, in one-letter code: uncharacterized protein (223 aa).

This is an uncharacterized protein from Treponema pallidum (strain Nichols).